The primary structure comprises 349 residues: Anaerobic nitrite reductase Glb1-3 (349 aa).

Globin domains are found at residues 13 to 162 (GFTE…AEMK) and 184 to 333 (CFTE…AEMK). Positions 56, 70, 74, 104, 108, 109, 227, 241, 245, 275, 279, and 280 each coordinate heme b.

The protein belongs to the plant globin family. In terms of assembly, monomer. The cofactor is heme b.

The protein localises to the cytoplasm. It is found in the nucleus. The enzyme catalyses Fe(III)-heme b-[protein] + nitric oxide + H2O = Fe(II)-heme b-[protein] + nitrite + 2 H(+). Phytoglobin that regulates the fine tuning of nitric oxide (NO) concentration in the cytosol in response to sudden changes in O(2) availability, and performs both symbiotic and nonsymbiotic functions. Exhibits NO dioxygenase activity in the presence of O(2) but nitrite reductase (NiR) activity in the absence of O(2) (e.g. during flooding or in waterlogged soil). May not function as an oxygen storage or transport protein. Extremely reactive toward the physiological ligands O(2), nitric oxide (NO), and nitrite with a very high affinity for O(2) through an hexacoordinate heme iron because of a very low dissociation constant. This chain is Anaerobic nitrite reductase Glb1-3, found in Medicago truncatula (Barrel medic).